The chain runs to 61 residues: Small ribosomal subunit protein bS21 (61 aa).

The tract at residues 36–61 (EHYESPSVKRKKKAEAARKRKYKYGR) is disordered. The segment covering 43-61 (VKRKKKAEAARKRKYKYGR) has biased composition (basic residues).

This sequence belongs to the bacterial ribosomal protein bS21 family.

The sequence is that of Small ribosomal subunit protein bS21 (rpsU) from Caldanaerobacter subterraneus subsp. tengcongensis (strain DSM 15242 / JCM 11007 / NBRC 100824 / MB4) (Thermoanaerobacter tengcongensis).